The chain runs to 73 residues: Small ribosomal subunit protein bS18 (73 aa).

Belongs to the bacterial ribosomal protein bS18 family. Part of the 30S ribosomal subunit. Forms a tight heterodimer with protein bS6.

Binds as a heterodimer with protein bS6 to the central domain of the 16S rRNA, where it helps stabilize the platform of the 30S subunit. The chain is Small ribosomal subunit protein bS18 from Prochlorococcus marinus (strain SARG / CCMP1375 / SS120).